The sequence spans 427 residues: Adenylosuccinate synthetase (427 aa).

Residues 12 to 18 (GDEGKGK) and 40 to 42 (GHT) contribute to the GTP site. Catalysis depends on D13, which acts as the Proton acceptor. Residues D13 and G40 each contribute to the Mg(2+) site. Residues 13–16 (DEGK), 38–41 (NAGH), T126, R140, Q221, T236, and R299 contribute to the IMP site. The active-site Proton donor is H41. 295 to 301 (STTKRPR) serves as a coordination point for substrate. Residues R301, 327 to 329 (KLD), and 409 to 411 (SVG) each bind GTP.

This sequence belongs to the adenylosuccinate synthetase family. Homodimer. Mg(2+) serves as cofactor.

The protein resides in the cytoplasm. The catalysed reaction is IMP + L-aspartate + GTP = N(6)-(1,2-dicarboxyethyl)-AMP + GDP + phosphate + 2 H(+). It participates in purine metabolism; AMP biosynthesis via de novo pathway; AMP from IMP: step 1/2. Plays an important role in the de novo pathway of purine nucleotide biosynthesis. Catalyzes the first committed step in the biosynthesis of AMP from IMP. The protein is Adenylosuccinate synthetase of Borrelia duttonii (strain Ly).